A 515-amino-acid polypeptide reads, in one-letter code: 2-isopropylmalate synthase (515 aa).

The 263-residue stretch at 5-267 (VIIFDTTLRD…DTRINTQEIH (263 aa)) folds into the Pyruvate carboxyltransferase domain. Mn(2+) contacts are provided by Asp14, His202, His204, and Asn238. Residues 392–515 (VLDKLSAHST…VADIKSHKHH (124 aa)) form a regulatory domain region.

Belongs to the alpha-IPM synthase/homocitrate synthase family. LeuA type 1 subfamily. In terms of assembly, homodimer. Mn(2+) is required as a cofactor.

The protein localises to the cytoplasm. The catalysed reaction is 3-methyl-2-oxobutanoate + acetyl-CoA + H2O = (2S)-2-isopropylmalate + CoA + H(+). The protein operates within amino-acid biosynthesis; L-leucine biosynthesis; L-leucine from 3-methyl-2-oxobutanoate: step 1/4. In terms of biological role, catalyzes the condensation of the acetyl group of acetyl-CoA with 3-methyl-2-oxobutanoate (2-ketoisovalerate) to form 3-carboxy-3-hydroxy-4-methylpentanoate (2-isopropylmalate). In Haemophilus influenzae (strain 86-028NP), this protein is 2-isopropylmalate synthase.